A 177-amino-acid polypeptide reads, in one-letter code: Protein GrpE (177 aa).

This sequence belongs to the GrpE family. Homodimer.

It localises to the cytoplasm. Functionally, participates actively in the response to hyperosmotic and heat shock by preventing the aggregation of stress-denatured proteins, in association with DnaK and GrpE. It is the nucleotide exchange factor for DnaK and may function as a thermosensor. Unfolded proteins bind initially to DnaJ; upon interaction with the DnaJ-bound protein, DnaK hydrolyzes its bound ATP, resulting in the formation of a stable complex. GrpE releases ADP from DnaK; ATP binding to DnaK triggers the release of the substrate protein, thus completing the reaction cycle. Several rounds of ATP-dependent interactions between DnaJ, DnaK and GrpE are required for fully efficient folding. The chain is Protein GrpE from Thermus thermophilus (strain ATCC BAA-163 / DSM 7039 / HB27).